Reading from the N-terminus, the 154-residue chain is Proline dehydrogenase transcriptional activator (154 aa).

Residues 5-66 (IDATDRRILH…MLSPIRLGLI (62 aa)) enclose the HTH asnC-type domain. The segment at residues 24–43 (VTELARKVGLSKTPVAARIR) is a DNA-binding region (H-T-H motif).

Its function is as follows. Transcriptional activator of the putA gene in response to proline. This is Proline dehydrogenase transcriptional activator (putR) from Rhodobacter capsulatus (Rhodopseudomonas capsulata).